Reading from the N-terminus, the 382-residue chain is Probable inactive dehydrogenase easA (382 aa).

FMN contacts are provided by residues 25–27, Ala60, Gln102, and His171; that span reads PMT. 2 residues coordinate substrate: His171 and Asn174. FMN contacts are provided by residues Lys223, Gly299, 324 to 325, and Arg325; that span reads GR. Tyr352 provides a ligand contact to substrate.

Belongs to the NADH:flavin oxidoreductase/NADH oxidase family.

Its function is as follows. Probable inactive dehydrogenase; part of the gene cluster that mediates the biosynthesis of fungal ergot alkaloid. DmaW catalyzes the first step of ergot alkaloid biosynthesis by condensing dimethylallyl diphosphate (DMAP) and tryptophan to form 4-dimethylallyl-L-tryptophan. The second step is catalyzed by the methyltransferase easF that methylates 4-dimethylallyl-L-tryptophan in the presence of S-adenosyl-L-methionine, resulting in the formation of 4-dimethylallyl-L-abrine. The catalase easC and the FAD-dependent oxidoreductase easE then transform 4-dimethylallyl-L-abrine to chanoclavine-I which is further oxidized by easD in the presence of NAD(+), resulting in the formation of chanoclavine-I aldehyde. Agroclavine dehydrogenase easG then mediates the conversion of chanoclavine-I aldehyde to agroclavine via a non-enzymatic adduct reaction: the substrate is an iminium intermediate that is formed spontaneously from chanoclavine-I aldehyde in the presence of glutathione. Further conversion of agroclavine to paspalic acid is a two-step process involving oxidation of agroclavine to elymoclavine and of elymoclavine to paspalic acid, the second step being performed by the elymoclavine oxidase cloA. However, cloA does not encode a functional enzyme indicating that C.fusiformis terminates its ergot alkaloid pathway at elymoclavine. The sequence is that of Probable inactive dehydrogenase easA from Claviceps fusiformis (Ergot fungus).